The primary structure comprises 99 residues: Nucleoid-associated protein EbfC (99 aa).

This sequence belongs to the YbaB/EbfC family. In terms of assembly, homodimer.

It is found in the cytoplasm. The protein resides in the nucleoid. Its function is as follows. Binds to DNA and alters its conformation. May be involved in regulation of gene expression, nucleoid organization and DNA protection. This Borreliella burgdorferi (strain ZS7) (Borrelia burgdorferi) protein is Nucleoid-associated protein EbfC.